We begin with the raw amino-acid sequence, 259 residues long: Phosphatidylglycerol--prolipoprotein diacylglyceryl transferase (259 aa).

4 helical membrane-spanning segments follow: residues 12–32, 46–66, 83–103, and 109–129; these read LSLH…VYLA, IIDF…IYYV, IWNG…VLFV, and VLNP…AQAI. R131 contributes to the a 1,2-diacyl-sn-glycero-3-phospho-(1'-sn-glycerol) binding site. Helical transmembrane passes span 167-187, 194-214, and 226-246; these read VPTF…IMVW, LLDG…RLVI, and GIRV…VFIF.

This sequence belongs to the Lgt family.

It is found in the cell membrane. The enzyme catalyses L-cysteinyl-[prolipoprotein] + a 1,2-diacyl-sn-glycero-3-phospho-(1'-sn-glycerol) = an S-1,2-diacyl-sn-glyceryl-L-cysteinyl-[prolipoprotein] + sn-glycerol 1-phosphate + H(+). Its pathway is protein modification; lipoprotein biosynthesis (diacylglyceryl transfer). In terms of biological role, catalyzes the transfer of the diacylglyceryl group from phosphatidylglycerol to the sulfhydryl group of the N-terminal cysteine of a prolipoprotein, the first step in the formation of mature lipoproteins. This is Phosphatidylglycerol--prolipoprotein diacylglyceryl transferase from Streptococcus equi subsp. zooepidemicus (strain MGCS10565).